Reading from the N-terminus, the 259-residue chain is Ribonuclease PH (259 aa).

Phosphate contacts are provided by residues R88 and 126–128 (GTR).

It belongs to the RNase PH family. In terms of assembly, homohexameric ring arranged as a trimer of dimers.

The catalysed reaction is tRNA(n+1) + phosphate = tRNA(n) + a ribonucleoside 5'-diphosphate. Phosphorolytic 3'-5' exoribonuclease that plays an important role in tRNA 3'-end maturation. Removes nucleotide residues following the 3'-CCA terminus of tRNAs; can also add nucleotides to the ends of RNA molecules by using nucleoside diphosphates as substrates, but this may not be physiologically important. Probably plays a role in initiation of 16S rRNA degradation (leading to ribosome degradation) during starvation. The protein is Ribonuclease PH of Mycobacterium leprae (strain Br4923).